A 138-amino-acid polypeptide reads, in one-letter code: MSDEERTLVLLKPDAVKRRLMGEIIGRYEAKGLTVRAMELSTIDTKIARKHYAEHVGRDYYAALEEFITSGPLVAMVLEGRRAISVVRAMNGTTDCAEALPGTIRGDFGTEKNHNLVHASDCLESAEREIGLWFPHLV.

6 residues coordinate ATP: Lys-12, Tyr-60, Arg-88, Thr-94, Arg-105, and Asn-115. The Pros-phosphohistidine intermediate role is filled by His-118.

This sequence belongs to the NDK family. As to quaternary structure, homotetramer. Mg(2+) serves as cofactor.

Its subcellular location is the cytoplasm. It carries out the reaction a 2'-deoxyribonucleoside 5'-diphosphate + ATP = a 2'-deoxyribonucleoside 5'-triphosphate + ADP. The enzyme catalyses a ribonucleoside 5'-diphosphate + ATP = a ribonucleoside 5'-triphosphate + ADP. Its function is as follows. Major role in the synthesis of nucleoside triphosphates other than ATP. The ATP gamma phosphate is transferred to the NDP beta phosphate via a ping-pong mechanism, using a phosphorylated active-site intermediate. In Cutibacterium acnes (strain DSM 16379 / KPA171202) (Propionibacterium acnes), this protein is Nucleoside diphosphate kinase.